The chain runs to 338 residues: DNA-directed RNA polymerase subunit alpha (338 aa).

Residues 1–226 (MLIAQRPTLS…ELFGLARELN (226 aa)) form an alpha N-terminal domain (alpha-NTD) region. The segment at 240–338 (DEQLAADLAL…DDAFVEDEQY (99 aa)) is alpha C-terminal domain (alpha-CTD).

It belongs to the RNA polymerase alpha chain family. In terms of assembly, homodimer. The RNAP catalytic core consists of 2 alpha, 1 beta, 1 beta' and 1 omega subunit. When a sigma factor is associated with the core the holoenzyme is formed, which can initiate transcription.

It carries out the reaction RNA(n) + a ribonucleoside 5'-triphosphate = RNA(n+1) + diphosphate. In terms of biological role, DNA-dependent RNA polymerase catalyzes the transcription of DNA into RNA using the four ribonucleoside triphosphates as substrates. This Nocardioides sp. (strain ATCC BAA-499 / JS614) protein is DNA-directed RNA polymerase subunit alpha.